A 338-amino-acid polypeptide reads, in one-letter code: Formamidase (338 aa).

The region spanning 14-257 is the CN hydrolase domain; that stretch reads VGIGLVQLQL…NEIITAEVRP (244 aa). The active-site Proton acceptor is the Glu-60. The active-site Proton donor is the Lys-129. Cys-162 serves as the catalytic Nucleophile.

It belongs to the carbon-nitrogen hydrolase superfamily. Aliphatic amidase family.

It catalyses the reaction formamide + H2O = formate + NH4(+). Functionally, is an aliphatic amidase with a restricted substrate specificity, as it only hydrolyzes formamide. The polypeptide is Formamidase (Allorhizobium ampelinum (strain ATCC BAA-846 / DSM 112012 / S4) (Agrobacterium vitis (strain S4))).